Consider the following 170-residue polypeptide: 3-dehydroquinate dehydratase (170 aa).

The active-site Proton acceptor is the Y22. The substrate site is built by N76, H82, and D89. H102 acts as the Proton donor in catalysis. Substrate-binding positions include 103–104 (LT) and R113.

Belongs to the type-II 3-dehydroquinase family. In terms of assembly, homododecamer.

It catalyses the reaction 3-dehydroquinate = 3-dehydroshikimate + H2O. Its pathway is metabolic intermediate biosynthesis; chorismate biosynthesis; chorismate from D-erythrose 4-phosphate and phosphoenolpyruvate: step 3/7. Functionally, catalyzes a trans-dehydration via an enolate intermediate. This chain is 3-dehydroquinate dehydratase (aroQ), found in Helicobacter pylori (strain J99 / ATCC 700824) (Campylobacter pylori J99).